The chain runs to 116 residues: Large ribosomal subunit protein bL20 (116 aa).

This sequence belongs to the bacterial ribosomal protein bL20 family.

In terms of biological role, binds directly to 23S ribosomal RNA and is necessary for the in vitro assembly process of the 50S ribosomal subunit. It is not involved in the protein synthesizing functions of that subunit. The protein is Large ribosomal subunit protein bL20 of Hydrogenobaculum sp. (strain Y04AAS1).